A 57-amino-acid polypeptide reads, in one-letter code: Small ribosomal subunit protein bS21 (57 aa).

Belongs to the bacterial ribosomal protein bS21 family.

The protein is Small ribosomal subunit protein bS21 of Bacillus pumilus (strain SAFR-032).